Reading from the N-terminus, the 104-residue chain is Larval cuticle protein 65Ab1 (104 aa).

The signal sequence occupies residues 1–18; it reads MKFLIVFVALFAMAVARP. The 71-residue stretch at 32-102 folds into the Chitin-binding type R&amp;R domain; that stretch reads PEKWSSDVET…PQGAHLPVAP (71 aa).

Component of the cuticle of the larva. The protein is Larval cuticle protein 65Ab1 of Drosophila melanogaster (Fruit fly).